We begin with the raw amino-acid sequence, 155 residues long: Small ribosomal subunit protein uS7c (155 aa).

Belongs to the universal ribosomal protein uS7 family. As to quaternary structure, part of the 30S ribosomal subunit.

The protein localises to the plastid. Its subcellular location is the chloroplast. Its function is as follows. One of the primary rRNA binding proteins, it binds directly to 16S rRNA where it nucleates assembly of the head domain of the 30S subunit. This Pinus koraiensis (Korean pine) protein is Small ribosomal subunit protein uS7c (rps7).